We begin with the raw amino-acid sequence, 54 residues long: Large ribosomal subunit protein bL33A (54 aa).

The protein belongs to the bacterial ribosomal protein bL33 family.

This chain is Large ribosomal subunit protein bL33A, found in Myxococcus xanthus (strain DK1622).